We begin with the raw amino-acid sequence, 275 residues long: uncharacterized protein (275 aa).

Residues 75–157 (AKELIKNRRL…AELKQAAEQG (83 aa)) adopt a coiled-coil conformation.

This is an uncharacterized protein from Bacillus subtilis (strain 168).